The following is a 124-amino-acid chain: UPF0231 protein Sama_0645 (124 aa).

The protein belongs to the UPF0231 family.

In Shewanella amazonensis (strain ATCC BAA-1098 / SB2B), this protein is UPF0231 protein Sama_0645.